A 345-amino-acid chain; its full sequence is L-threonine 3-dehydrogenase (345 aa).

C42 contacts Zn(2+). Active-site charge relay system residues include T44 and H47. Residues H67, E68, C97, C100, C103, and C111 each contribute to the Zn(2+) site. NAD(+)-binding positions include I179, D199, R204, 266–268 (LGI), and 290–291 (IY).

It belongs to the zinc-containing alcohol dehydrogenase family. In terms of assembly, homotetramer. The cofactor is Zn(2+).

Its subcellular location is the cytoplasm. It catalyses the reaction L-threonine + NAD(+) = (2S)-2-amino-3-oxobutanoate + NADH + H(+). The protein operates within amino-acid degradation; L-threonine degradation via oxydo-reductase pathway; glycine from L-threonine: step 1/2. Functionally, catalyzes the NAD(+)-dependent oxidation of L-threonine to 2-amino-3-ketobutyrate. The chain is L-threonine 3-dehydrogenase from Sinorhizobium fredii (strain NBRC 101917 / NGR234).